The primary structure comprises 200 residues: 3-isopropylmalate dehydratase small subunit (200 aa).

This sequence belongs to the LeuD family. LeuD type 1 subfamily. As to quaternary structure, heterodimer of LeuC and LeuD.

The enzyme catalyses (2R,3S)-3-isopropylmalate = (2S)-2-isopropylmalate. The protein operates within amino-acid biosynthesis; L-leucine biosynthesis; L-leucine from 3-methyl-2-oxobutanoate: step 2/4. Catalyzes the isomerization between 2-isopropylmalate and 3-isopropylmalate, via the formation of 2-isopropylmaleate. This chain is 3-isopropylmalate dehydratase small subunit, found in Pectobacterium atrosepticum (strain SCRI 1043 / ATCC BAA-672) (Erwinia carotovora subsp. atroseptica).